A 397-amino-acid polypeptide reads, in one-letter code: DNA-directed RNA polymerase subunit Rpo1C (397 aa).

The protein belongs to the RNA polymerase beta' chain family. As to quaternary structure, part of the RNA polymerase complex.

It localises to the cytoplasm. It carries out the reaction RNA(n) + a ribonucleoside 5'-triphosphate = RNA(n+1) + diphosphate. Its function is as follows. DNA-dependent RNA polymerase (RNAP) catalyzes the transcription of DNA into RNA using the four ribonucleoside triphosphates as substrates. Forms part of the jaw domain. This chain is DNA-directed RNA polymerase subunit Rpo1C, found in Halobacterium salinarum (strain ATCC 29341 / DSM 671 / R1).